A 315-amino-acid chain; its full sequence is MTTSSLPILIVICGATATGKSSLALQLAEKFNSVILSADSRQIYREFNIGTAKPSLEECQRIPHYLIDICDPQDNFTLAQYQEQAEDLINNLHYSPLFLVGGTGLYIKSIVKGLKIPRVSPQADLRRQLQALGQSYLYQILTQVDEEAAKKIHPHDQVRTLRALEVFYLTGKPISSQQGENPPTYPILQIGLDCSPESLGKRITVRTDQMIARGLVAEVQNLGDKYGWDLPLLQTLGYAEIKQYLLGEISLEQAIDLIILHTRQFAKRQRTWFRADADIIWFPVDKENLLESVEREIILFLEGLSRPDIKTHHPD.

14 to 21 (GATATGKS) contacts ATP. 16-21 (TATGKS) provides a ligand contact to substrate. Positions 39–42 (DSRQ) are interaction with substrate tRNA.

Belongs to the IPP transferase family. In terms of assembly, monomer. The cofactor is Mg(2+).

It catalyses the reaction adenosine(37) in tRNA + dimethylallyl diphosphate = N(6)-dimethylallyladenosine(37) in tRNA + diphosphate. In terms of biological role, catalyzes the transfer of a dimethylallyl group onto the adenine at position 37 in tRNAs that read codons beginning with uridine, leading to the formation of N6-(dimethylallyl)adenosine (i(6)A). The chain is tRNA dimethylallyltransferase from Microcystis aeruginosa (strain NIES-843 / IAM M-2473).